Consider the following 357-residue polypeptide: Alanine racemase (357 aa).

Lys-35 functions as the Proton acceptor; specific for D-alanine in the catalytic mechanism. Residue Lys-35 is modified to N6-(pyridoxal phosphate)lysine. Arg-130 contributes to the substrate binding site. The active-site Proton acceptor; specific for L-alanine is the Tyr-253. Residue Met-302 coordinates substrate.

It belongs to the alanine racemase family. It depends on pyridoxal 5'-phosphate as a cofactor.

It carries out the reaction L-alanine = D-alanine. Its pathway is amino-acid biosynthesis; D-alanine biosynthesis; D-alanine from L-alanine: step 1/1. Catalyzes the interconversion of L-alanine and D-alanine. May also act on other amino acids. The polypeptide is Alanine racemase (alr) (Wigglesworthia glossinidia brevipalpis).